The following is a 150-amino-acid chain: MFRGVANLNLDTKGRMAMPSRYRDRLVETCEGRLVITVDRDGCLLVYPQPEWERIEQALMSRPNMDRQVRRLQRLLVGHATECELDGQGRILLPPPLRDYAGLDKRVVLVGQGNKFELWDEDTWVKSRDEWFKEEDETAEPSAVLESLSL.

SpoVT-AbrB domains lie at 5 to 51 (VANL…PQPE) and 80 to 123 (ATEC…DEDT).

It belongs to the MraZ family. As to quaternary structure, forms oligomers.

It is found in the cytoplasm. The protein resides in the nucleoid. The polypeptide is Transcriptional regulator MraZ (Thioalkalivibrio sulfidiphilus (strain HL-EbGR7)).